A 309-amino-acid chain; its full sequence is Elongation factor Ts (309 aa).

The involved in Mg(2+) ion dislocation from EF-Tu stretch occupies residues 82–85; it reads TDFV.

Belongs to the EF-Ts family.

The protein resides in the cytoplasm. Associates with the EF-Tu.GDP complex and induces the exchange of GDP to GTP. It remains bound to the aminoacyl-tRNA.EF-Tu.GTP complex up to the GTP hydrolysis stage on the ribosome. This chain is Elongation factor Ts, found in Rickettsia massiliae (strain Mtu5).